The sequence spans 335 residues: MAVEAHHLNPLFSSNREMIHPVEASGVVYNTQMRYGTVPTFNPTVECQTSLFNPIYNISPVDRLVHQSMKPTIQSVDSSLTFNSDNNVDFLRPVSSRKRSREESVVLNPSAYMQIQKNPTDPLMFLGQDLSSNVQQHHFDIDRLISNHVERMRMEIEEKRKTQGRRIVEAVEQGLMKTLRAKDDEINHIGKLNLFLEEKVKSLCVENQIWRDVAQSNEATVNALRSNLQQVLAAVERNRWEEPPTVADDAQSCCGSNDEGDSEEERWKLAGEAQDTKKMCRVGMSMCRSCGKGEASVLLLPCRHMCLCSVCGSSLNTCPICKSPKTASLHVNLSS.

The segment at 196-232 (LEEKVKSLCVENQIWRDVAQSNEATVNALRSNLQQVL) is WRD domain. The segment at 287 to 322 (CRSCGKGEASVLLLPCRHMCLCSVCGSSLNTCPICK) adopts an RING-type zinc-finger fold.

As to quaternary structure, interacts with the DELLA proteins GAI, RGA, RGL1, RGL2 and RGL3.

It catalyses the reaction S-ubiquitinyl-[E2 ubiquitin-conjugating enzyme]-L-cysteine + [acceptor protein]-L-lysine = [E2 ubiquitin-conjugating enzyme]-L-cysteine + N(6)-ubiquitinyl-[acceptor protein]-L-lysine.. It participates in protein degradation; proteasomal ubiquitin-dependent pathway. In terms of biological role, probable E3 ubiquitin-protein ligase. Has no effect on the stability of the DELLA proteins. The chain is Probable BOI-related E3 ubiquitin-protein ligase 3 (BRG3) from Arabidopsis thaliana (Mouse-ear cress).